The primary structure comprises 204 residues: High frequency lysogenization protein HflD homolog (204 aa).

It belongs to the HflD family.

The protein localises to the cytoplasm. It localises to the cell inner membrane. This is High frequency lysogenization protein HflD homolog from Actinobacillus succinogenes (strain ATCC 55618 / DSM 22257 / CCUG 43843 / 130Z).